The chain runs to 41 residues: U-AITX-Bg1a (41 aa).

3 disulfides stabilise this stretch: Cys-2-Cys-35, Cys-4-Cys-28, and Cys-18-Cys-36.

It belongs to the sea anemone type 3 (BDS) potassium channel toxin family.

It is found in the secreted. It localises to the nematocyst. Its function is as follows. Potently and selectively inhibits voltage-gated potassium channels Kv11/KCNH/ERG. Acts as a gating-modifier toxin that shifts the voltage-dependence of ERG activation in the positive direction and suppresses its current amplitudes elicited by strong depolarizing pulses that maximally activate the channels. The sequence is that of U-AITX-Bg1a from Bunodosoma granuliferum (Red warty sea anemone).